The sequence spans 921 residues: Translation initiation factor IF-2 (921 aa).

The tract at residues 1-296 (MADQNTPGDK…PGPQKQRGRL (296 aa)) is disordered. Residues 80 to 89 (RPSGPRPSGG) show a composition bias toward low complexity. Residues 117-183 (ARVRDLEERR…AKKRFGEGEA (67 aa)) are compositionally biased toward basic and acidic residues. Composition is skewed to low complexity over residues 184-237 (PRPA…ARPA) and 248-257 (GRAPAAVAAG). The tr-type G domain occupies 417-586 (PRSPVVTVMG…MIALQADILD (170 aa)). A G1 region spans residues 426–433 (GHVDHGKT). 426 to 433 (GHVDHGKT) contributes to the GTP binding site. The G2 stretch occupies residues 451-455 (GITQH). A G3 region spans residues 474–477 (DTPG). GTP contacts are provided by residues 474–478 (DTPGH) and 528–531 (NKID). A G4 region spans residues 528–531 (NKID). Residues 564-566 (SAK) form a G5 region.

The protein belongs to the TRAFAC class translation factor GTPase superfamily. Classic translation factor GTPase family. IF-2 subfamily.

The protein localises to the cytoplasm. Functionally, one of the essential components for the initiation of protein synthesis. Protects formylmethionyl-tRNA from spontaneous hydrolysis and promotes its binding to the 30S ribosomal subunits. Also involved in the hydrolysis of GTP during the formation of the 70S ribosomal complex. The protein is Translation initiation factor IF-2 of Bradyrhizobium sp. (strain ORS 278).